Here is a 611-residue protein sequence, read N- to C-terminus: MNKFIVVGAGHAGLEAAFILSKLNNKVYLCVLDRKYVANCPCNPSVGGPAKGIVTREIDALGGIQALAADSTALQRKILNSSKGPGVQCLRFQIDKVYYKKWFLEQIDNNENIELVEGEVTEVIKNGDTATGVMIDGVKKLEAGAVIITTGTYLKSLTFSGKDVKNEGPEGFKNSNNLSEWFKVNGFELIRLKTGTPPRIKKDSIDYSNLQIEPGNGTELYFSHWSKNKYIDYELPCYLIHTTEEIHKIINDNLHLSAMYSGNITGVGPRYCPSIEDKIVRFSNKPRHQIFLEPESLELDTVYLGGFSTSLDISVQDKIIRLLPGLKKAEVIKYGYAIEYDAINPIQLYPSLESKLIKNLFFAGQINGTSGYEEAAGQGLIAGINANQKIKNKEPLILSRDEAYIGVMIDDIVNKGVTDPYRLLTSRAEYRLLLRNDNVLDRLIQKGYEIGTISKEQIDLYNQNLEKKNKLIEFLKDKKVGMYTLLKAHTNNTNFSLYEFLKRPEIKLIELLKLIEFDYSNYDLELLKNIEITVKYEGYIKKESRIVNSLKNLESIKIPKDLIYDKVQNLSIEAIDKLNKIKPLNLAQAQRISGINLADIISLKTHLEQNA.

Residues 8-13 (GAGHAG), Val120, and Ser175 each bind FAD. Position 268–282 (268–282 (GPRYCPSIEDKIVRF)) interacts with NAD(+). Gln365 contacts FAD.

Belongs to the MnmG family. As to quaternary structure, homodimer. Heterotetramer of two MnmE and two MnmG subunits. FAD is required as a cofactor.

The protein resides in the cytoplasm. In terms of biological role, NAD-binding protein involved in the addition of a carboxymethylaminomethyl (cmnm) group at the wobble position (U34) of certain tRNAs, forming tRNA-cmnm(5)s(2)U34. This chain is tRNA uridine 5-carboxymethylaminomethyl modification enzyme MnmG, found in Mycoplasmoides gallisepticum (strain R(low / passage 15 / clone 2)) (Mycoplasma gallisepticum).